The following is a 269-amino-acid chain: Formamidopyrimidine-DNA glycosylase (269 aa).

Pro-2 (schiff-base intermediate with DNA) is an active-site residue. The active-site Proton donor is Glu-3. The Proton donor; for beta-elimination activity role is filled by Lys-57. Residues His-90, Arg-109, and Lys-150 each contribute to the DNA site. The segment at 235–269 (QVYGRKGEPCRVCGTPIAATKHAQRATFYCRHCQK) adopts an FPG-type zinc-finger fold. Arg-259 serves as the catalytic Proton donor; for delta-elimination activity.

Belongs to the FPG family. Monomer. The cofactor is Zn(2+).

The catalysed reaction is Hydrolysis of DNA containing ring-opened 7-methylguanine residues, releasing 2,6-diamino-4-hydroxy-5-(N-methyl)formamidopyrimidine.. It catalyses the reaction 2'-deoxyribonucleotide-(2'-deoxyribose 5'-phosphate)-2'-deoxyribonucleotide-DNA = a 3'-end 2'-deoxyribonucleotide-(2,3-dehydro-2,3-deoxyribose 5'-phosphate)-DNA + a 5'-end 5'-phospho-2'-deoxyribonucleoside-DNA + H(+). Its function is as follows. Involved in base excision repair of DNA damaged by oxidation or by mutagenic agents. Acts as a DNA glycosylase that recognizes and removes damaged bases. Has a preference for oxidized purines, such as 7,8-dihydro-8-oxoguanine (8-oxoG). Has AP (apurinic/apyrimidinic) lyase activity and introduces nicks in the DNA strand. Cleaves the DNA backbone by beta-delta elimination to generate a single-strand break at the site of the removed base with both 3'- and 5'-phosphates. The sequence is that of Formamidopyrimidine-DNA glycosylase from Salmonella paratyphi B (strain ATCC BAA-1250 / SPB7).